Reading from the N-terminus, the 174-residue chain is Glutaredoxin-C5, chloroplastic (174 aa).

A chloroplast-targeting transit peptide spans 1-51 (MAVTAFNTLKLVSSSLDPIPSVSCSSYSFSLIYVGSPYKRCLKQSCSVRAM). Thr-52 carries the N-acetylthreonine modification. Cys-90 is subject to S-glutathionyl cysteine; partial. Cys-90 and Cys-93 form a disulfide bridge. The region spanning 93 to 171 (CTEVKTLFKR…LMLAEANGKN (79 aa)) is the Glutaredoxin domain. Residues Val-135, Cys-148, and Thr-149 each coordinate glutathione. Cys-148 is subject to S-glutathionyl cysteine; partial.

The protein belongs to the glutaredoxin family. CPYC subfamily. As to quaternary structure, monomeric apoprotein and homodimeric holoprotein containing a [2Fe-2S] cluster. No in vitro interactions with SUFE1, BOLA1, BOLA2 or BOLA4. In terms of processing, glutathionylated.

The protein localises to the plastid. The protein resides in the chloroplast. In terms of biological role, has a glutathione-disulfide oxidoreductase activity in the presence of NADPH and glutathione reductase. Reduces low molecular weight disulfides and proteins. Can assemble a [2Fe-2S] cluster, but cannot transfer it to an apoferredoxin. This is Glutaredoxin-C5, chloroplastic from Arabidopsis thaliana (Mouse-ear cress).